The following is a 169-amino-acid chain: Cytochrome c oxidase subunit 4 isoform 1, mitochondrial (169 aa).

Residues 1-22 constitute a mitochondrion transit peptide; sequence MLASRALSLIGKRAISTSVCLR. Residues 23–99 lie on the Mitochondrial matrix side of the membrane; that stretch reads AHGSVVKSED…FAEMNRGTNE (77 aa). Residue K29 is modified to N6-acetyllysine; alternate. An N6-succinyllysine; alternate modification is found at K29. A phosphoserine mark is found at S56 and S58. K60 carries the post-translational modification N6-acetyllysine; alternate. Position 60 is an N6-succinyllysine; alternate (K60). K67 bears the N6-acetyllysine mark. Residues 100–125 form a helical membrane-spanning segment; sequence WKTVVGMAMFFIGFTALVLIWEKSYV. Topologically, residues 126–169 are mitochondrial intermembrane; that stretch reads YGPIPHTFDRDWVAMQTKRMLDMKANPIQGFSAKWDYDKNEWKK.

Belongs to the cytochrome c oxidase IV family. Component of the cytochrome c oxidase (complex IV, CIV), a multisubunit enzyme composed of 14 subunits. The complex is composed of a catalytic core of 3 subunits MT-CO1, MT-CO2 and MT-CO3, encoded in the mitochondrial DNA, and 11 supernumerary subunits COX4I, COX5A, COX5B, COX6A, COX6B, COX6C, COX7A, COX7B, COX7C, COX8 and NDUFA4, which are encoded in the nuclear genome. The complex exists as a monomer or a dimer and forms supercomplexes (SCs) in the inner mitochondrial membrane with NADH-ubiquinone oxidoreductase (complex I, CI) and ubiquinol-cytochrome c oxidoreductase (cytochrome b-c1 complex, complex III, CIII), resulting in different assemblies (supercomplex SCI(1)III(2)IV(1) and megacomplex MCI(2)III(2)IV(2)). Interacts with PHB2; the interaction decreases in absence of SPHK2. Interacts with AFG1L. Interacts with ABCB7; this interaction allows the regulation of cellular iron homeostasis and cellular reactive oxygen species (ROS) levels in cardiomyocytes. Interacts with FLVCR2; this interaction occurs in the absence of heme and is disrupted upon heme binding. Interacts with IRGC.

Its subcellular location is the mitochondrion inner membrane. It participates in energy metabolism; oxidative phosphorylation. In terms of biological role, component of the cytochrome c oxidase, the last enzyme in the mitochondrial electron transport chain which drives oxidative phosphorylation. The respiratory chain contains 3 multisubunit complexes succinate dehydrogenase (complex II, CII), ubiquinol-cytochrome c oxidoreductase (cytochrome b-c1 complex, complex III, CIII) and cytochrome c oxidase (complex IV, CIV), that cooperate to transfer electrons derived from NADH and succinate to molecular oxygen, creating an electrochemical gradient over the inner membrane that drives transmembrane transport and the ATP synthase. Cytochrome c oxidase is the component of the respiratory chain that catalyzes the reduction of oxygen to water. Electrons originating from reduced cytochrome c in the intermembrane space (IMS) are transferred via the dinuclear copper A center (CU(A)) of subunit 2 and heme A of subunit 1 to the active site in subunit 1, a binuclear center (BNC) formed by heme A3 and copper B (CU(B)). The BNC reduces molecular oxygen to 2 water molecules using 4 electrons from cytochrome c in the IMS and 4 protons from the mitochondrial matrix. This Mus musculus (Mouse) protein is Cytochrome c oxidase subunit 4 isoform 1, mitochondrial (Cox4i1).